The sequence spans 269 residues: 1,6-dihydroxycyclohexa-2,4-diene-1-carboxylate dehydrogenase (269 aa).

11–35 (VITGAAQGIGRRVAERMAAEGGRLL) is a binding site for NAD(+). Substrate is bound at residue Ser-142. Residue Tyr-153 is the Proton acceptor of the active site.

The protein belongs to the short-chain dehydrogenases/reductases (SDR) family. As to quaternary structure, homodimer.

The enzyme catalyses (1R,6S)-1,6-dihydroxycyclohexa-2,4-diene-1-carboxylate + NAD(+) = catechol + CO2 + NADH. The protein operates within aromatic compound metabolism; benzoate degradation via hydroxylation; catechol from benzoate: step 2/2. Its function is as follows. Degradation of 2-hydro-1,2-dihydroxy benzoate (DHB) to catechol. The sequence is that of 1,6-dihydroxycyclohexa-2,4-diene-1-carboxylate dehydrogenase (xylL) from Pseudomonas putida (Arthrobacter siderocapsulatus).